Reading from the N-terminus, the 125-residue chain is Cu-Zn superoxide dismutase-like protein OPG175 (125 aa).

Cys-52 and Cys-102 are oxidised to a cystine.

The protein belongs to the Cu-Zn superoxide dismutase family.

Its subcellular location is the virion. It localises to the host cytoplasm. Its function is as follows. Superoxide dismutase-like protein with no enzymatic activity. The protein is Cu-Zn superoxide dismutase-like protein OPG175 (OPG175) of Monkeypox virus.